The sequence spans 234 residues: Carboxy-S-adenosyl-L-methionine synthase (234 aa).

S-adenosyl-L-methionine contacts are provided by residues Tyr35, 60-62 (GCS), 109-110 (DI), Asn124, and Arg191.

The protein belongs to the class I-like SAM-binding methyltransferase superfamily. Cx-SAM synthase family. As to quaternary structure, homodimer.

The catalysed reaction is prephenate + S-adenosyl-L-methionine = carboxy-S-adenosyl-L-methionine + 3-phenylpyruvate + H2O. Its function is as follows. Catalyzes the conversion of S-adenosyl-L-methionine (SAM) to carboxy-S-adenosyl-L-methionine (Cx-SAM). The polypeptide is Carboxy-S-adenosyl-L-methionine synthase (Campylobacter fetus subsp. fetus (strain 82-40)).